The chain runs to 930 residues: Isoleucine--tRNA ligase (930 aa).

Residues 57–67 (PYANGNIHVGH) carry the 'HIGH' region motif. Residue Glu-554 coordinates L-isoleucyl-5'-AMP. The 'KMSKS' region motif lies at 595–599 (KMSKS). Residue Lys-598 coordinates ATP. The Zn(2+) site is built by Cys-888, Cys-891, Cys-908, and Cys-911.

The protein belongs to the class-I aminoacyl-tRNA synthetase family. IleS type 1 subfamily. As to quaternary structure, monomer. Zn(2+) is required as a cofactor.

It localises to the cytoplasm. It carries out the reaction tRNA(Ile) + L-isoleucine + ATP = L-isoleucyl-tRNA(Ile) + AMP + diphosphate. Functionally, catalyzes the attachment of isoleucine to tRNA(Ile). As IleRS can inadvertently accommodate and process structurally similar amino acids such as valine, to avoid such errors it has two additional distinct tRNA(Ile)-dependent editing activities. One activity is designated as 'pretransfer' editing and involves the hydrolysis of activated Val-AMP. The other activity is designated 'posttransfer' editing and involves deacylation of mischarged Val-tRNA(Ile). In Streptococcus pneumoniae (strain CGSP14), this protein is Isoleucine--tRNA ligase.